The following is a 115-amino-acid chain: MANHFRVDRVGMEIKREVNEILQKKVRDPRVQGVTITDVQMLGDLSMAKVYYTIMSDLASDNQKAQLGLEKATGTIKRELGHNLKMYKIPDLTFVKDQSIEYGNKIDQMLRDLDK.

It belongs to the RbfA family. As to quaternary structure, monomer. Binds 30S ribosomal subunits, but not 50S ribosomal subunits or 70S ribosomes.

It localises to the cytoplasm. In terms of biological role, one of several proteins that assist in the late maturation steps of the functional core of the 30S ribosomal subunit. Associates with free 30S ribosomal subunits (but not with 30S subunits that are part of 70S ribosomes or polysomes). Required for efficient processing of 16S rRNA. May interact with the 5'-terminal helix region of 16S rRNA. The protein is Ribosome-binding factor A of Streptococcus gordonii (strain Challis / ATCC 35105 / BCRC 15272 / CH1 / DL1 / V288).